The primary structure comprises 267 residues: Sulfur carrier protein FdhD (267 aa).

The active-site Cysteine persulfide intermediate is the cysteine 108.

It belongs to the FdhD family.

Its subcellular location is the cytoplasm. Its function is as follows. Required for formate dehydrogenase (FDH) activity. Acts as a sulfur carrier protein that transfers sulfur from IscS to the molybdenum cofactor prior to its insertion into FDH. This chain is Sulfur carrier protein FdhD, found in Shouchella clausii (strain KSM-K16) (Alkalihalobacillus clausii).